A 278-amino-acid chain; its full sequence is S-formylglutathione hydrolase YeiG (278 aa).

Residues S145, D223, and H256 each act as charge relay system in the active site.

The protein belongs to the esterase D family.

It carries out the reaction S-formylglutathione + H2O = formate + glutathione + H(+). Its function is as follows. Serine hydrolase involved in the detoxification of formaldehyde. Hydrolyzes S-formylglutathione to glutathione and formate. The sequence is that of S-formylglutathione hydrolase YeiG (yeiG) from Shigella boydii serotype 4 (strain Sb227).